Here is an 86-residue protein sequence, read N- to C-terminus: Small ribosomal subunit protein uS17 (86 aa).

It belongs to the universal ribosomal protein uS17 family. In terms of assembly, part of the 30S ribosomal subunit.

In terms of biological role, one of the primary rRNA binding proteins, it binds specifically to the 5'-end of 16S ribosomal RNA. In Tropheryma whipplei (strain TW08/27) (Whipple's bacillus), this protein is Small ribosomal subunit protein uS17.